The sequence spans 535 residues: MKKISLKTLRKSFNLNKSKEETDFMVVQQPSLASDFGKDDSLFGSCYGKDMASCDINGEDEKGGKNRSKSESLMGTLKRRLSAKQKSKGKAGTPSGSSADEDTFSSSSAPIVFKDVRAQRPIRSTSLRSHHYSPAPWPLRPTNSEETCIKMEVRVKALVHSSSPSPALNGVRKDFHDLQSETTCQEQANSLKSSASHNGDLHLHLDEHVPVVIGLMPQDYIQYTVPLDEGMYPLEGSRSYCLDSSSPMEVSAVPPQVGGRAFPEDESQVDQDLVVAPEIFVDQSVNGLLIGTTGVMLQSPRAGHDDVPPLSPLLPPMQNNQIQRNFSGLTGTEAHVAESMRCHLNFDPNSAPGVARVYDSVQSSGPMVVTSLTEELKKLAKQGWYWGPITRWEAEGKLANVPDGSFLVRDSSDDRYLLSLSFRSHGKTLHTRIEHSNGRFSFYEQPDVEGHTSIVDLIEHSIRDSENGAFCYSRSRLPGSATYPVRLTNPVSRFMQVRSLQYLCRFVIRQYTRIDLIQKLPLPNKMKDYLQEKHY.

Over residues 80 to 89 (RLSAKQKSKG) the composition is skewed to basic residues. The tract at residues 80–105 (RLSAKQKSKGKAGTPSGSSADEDTFS) is disordered. The region spanning 384–491 (WYWGPITRWE…TYPVRLTNPV (108 aa)) is the SH2 domain. Positions 486–535 (RLTNPVSRFMQVRSLQYLCRFVIRQYTRIDLIQKLPLPNKMKDYLQEKHY) constitute an SOCS box domain.

Interacts with RBCK1. Interacts with phosphorylated IRS4. Interacts with PIM3. Interacts with KIT (phosphorylated).

It functions in the pathway protein modification; protein ubiquitination. In terms of biological role, SOCS family proteins form part of a classical negative feedback system that regulates cytokine signal transduction. May be a substrate recognition component of a SCF-like ECS (Elongin BC-CUL2/5-SOCS-box protein) E3 ubiquitin-protein ligase complex which mediates the ubiquitination and subsequent proteasomal degradation of target proteins. Regulates KIT degradation by ubiquitination of the tyrosine-phosphorylated receptor. The chain is Suppressor of cytokine signaling 6 (SOCS6) from Homo sapiens (Human).